We begin with the raw amino-acid sequence, 151 residues long: Probable cGMP 3',5'-cyclic phosphodiesterase subunit delta (151 aa).

It belongs to the PDE6D/unc-119 family. As to quaternary structure, interacts with Pde6.

Its subcellular location is the nucleus. The protein localises to the cytoplasm. The protein is Probable cGMP 3',5'-cyclic phosphodiesterase subunit delta of Drosophila erecta (Fruit fly).